The chain runs to 1465 residues: DNA polymerase III PolC-type (1465 aa).

Residues 427–583 (YVVFDVETTG…YDAEATGRLL (157 aa)) enclose the Exonuclease domain.

Belongs to the DNA polymerase type-C family. PolC subfamily.

It localises to the cytoplasm. It catalyses the reaction DNA(n) + a 2'-deoxyribonucleoside 5'-triphosphate = DNA(n+1) + diphosphate. In terms of biological role, required for replicative DNA synthesis. This DNA polymerase also exhibits 3' to 5' exonuclease activity. This Streptococcus pyogenes serotype M18 (strain MGAS8232) protein is DNA polymerase III PolC-type.